We begin with the raw amino-acid sequence, 217 residues long: Large ribosomal subunit protein uL1 (217 aa).

An N6,N6-dimethyllysine; alternate modification is found at Lys122. Position 122 is an N6-methyllysine; alternate (Lys122).

Belongs to the universal ribosomal protein uL1 family.

The protein is Large ribosomal subunit protein uL1 (rpl10a) of Dictyostelium discoideum (Social amoeba).